A 503-amino-acid chain; its full sequence is Probable cytosol aminopeptidase (503 aa).

Residues Lys-270 and Asp-275 each coordinate Mn(2+). The active site involves Lys-282. Residues Asp-293, Asp-352, and Glu-354 each coordinate Mn(2+). Residue Arg-356 is part of the active site.

This sequence belongs to the peptidase M17 family. Mn(2+) is required as a cofactor.

It localises to the cytoplasm. It catalyses the reaction Release of an N-terminal amino acid, Xaa-|-Yaa-, in which Xaa is preferably Leu, but may be other amino acids including Pro although not Arg or Lys, and Yaa may be Pro. Amino acid amides and methyl esters are also readily hydrolyzed, but rates on arylamides are exceedingly low.. It carries out the reaction Release of an N-terminal amino acid, preferentially leucine, but not glutamic or aspartic acids.. In terms of biological role, presumably involved in the processing and regular turnover of intracellular proteins. Catalyzes the removal of unsubstituted N-terminal amino acids from various peptides. The sequence is that of Probable cytosol aminopeptidase from Escherichia coli O139:H28 (strain E24377A / ETEC).